The primary structure comprises 40 residues: Conotoxin Bt14.16 (40 aa).

The propeptide occupies 1–18; that stretch reads SDGRDAAVIYTESDVIAR. 2 disulfides stabilise this stretch: C21–C36 and C24–C29.

Belongs to the conotoxin A superfamily. As to expression, expressed by the venom duct.

The protein resides in the secreted. In terms of biological role, probable neurotoxin with unknown target. Possibly targets ion channels. In Conus betulinus (Beech cone), this protein is Conotoxin Bt14.16.